We begin with the raw amino-acid sequence, 266 residues long: Blue copper protein (266 aa).

The signal sequence occupies residues 1–24 (MAYSKILFCFMIGFVGFLPAITMA). Phytocyanin domains are found at residues 25-56 (TQYL…GDTL), 57-102 (APPP…TVED), and 116-216 (TEYW…TVEG). Asn-47 carries an N-linked (GlcNAc...) asparagine glycan. His-156 lines the Cu cation pocket. Asn-162 carries an N-linked (GlcNAc...) asparagine glycan. Cys-169 and Cys-203 are joined by a disulfide. Cu cation is bound by residues Cys-197, His-202, and Gln-208. The chain crosses the membrane as a helical span at residues 245–265 (ITSPYKMFVGGAVSIWTILTL).

The protein localises to the membrane. The polypeptide is Blue copper protein (Petunia hybrida (Petunia)).